The chain runs to 348 residues: Protein pelota homolog (348 aa).

It belongs to the eukaryotic release factor 1 family. Pelota subfamily. Monomer. A divalent metal cation serves as cofactor.

Its subcellular location is the cytoplasm. Functionally, may function in recognizing stalled ribosomes, interact with stem-loop structures in stalled mRNA molecules, and effect endonucleolytic cleavage of the mRNA. May play a role in the release non-functional ribosomes and degradation of damaged mRNAs. Has endoribonuclease activity. This is Protein pelota homolog from Methanococcus maripaludis (strain C7 / ATCC BAA-1331).